The primary structure comprises 380 residues: Erythronate-4-phosphate dehydrogenase (380 aa).

Residues Ser-45 and Thr-66 each contribute to the substrate site. NAD(+)-binding positions include Asp-146, Thr-174, 205–207, and Asp-231; that span reads ASR. Residue Arg-207 is part of the active site. Residue Glu-236 is part of the active site. His-253 (proton donor) is an active-site residue. An NAD(+)-binding site is contributed by Gly-256. Residue Tyr-257 participates in substrate binding.

This sequence belongs to the D-isomer specific 2-hydroxyacid dehydrogenase family. PdxB subfamily. As to quaternary structure, homodimer.

It is found in the cytoplasm. The enzyme catalyses 4-phospho-D-erythronate + NAD(+) = (R)-3-hydroxy-2-oxo-4-phosphooxybutanoate + NADH + H(+). It participates in cofactor biosynthesis; pyridoxine 5'-phosphate biosynthesis; pyridoxine 5'-phosphate from D-erythrose 4-phosphate: step 2/5. Catalyzes the oxidation of erythronate-4-phosphate to 3-hydroxy-2-oxo-4-phosphonooxybutanoate. This is Erythronate-4-phosphate dehydrogenase from Pseudomonas putida (strain ATCC 700007 / DSM 6899 / JCM 31910 / BCRC 17059 / LMG 24140 / F1).